A 333-amino-acid chain; its full sequence is Probable tRNA pseudouridine synthase B (333 aa).

The active-site Nucleophile is aspartate 66. Positions leucine 233 to methionine 308 constitute a PUA domain.

This sequence belongs to the pseudouridine synthase TruB family. Type 2 subfamily.

It carries out the reaction uridine(55) in tRNA = pseudouridine(55) in tRNA. Its function is as follows. Could be responsible for synthesis of pseudouridine from uracil-55 in the psi GC loop of transfer RNAs. This Methanococcus maripaludis (strain C7 / ATCC BAA-1331) protein is Probable tRNA pseudouridine synthase B.